The sequence spans 84 residues: Defensin-like protein 116 (84 aa).

The signal sequence occupies residues 1–24 (MAITKNMLVVLLLTIIFVTSSVHC). 4 cysteine pairs are disulfide-bonded: C40–C80, C46–C71, C55–C78, and C59–C79.

It belongs to the DEFL family.

It localises to the secreted. This is Defensin-like protein 116 from Arabidopsis thaliana (Mouse-ear cress).